The following is a 201-amino-acid chain: Increased recombination centers protein 21 (201 aa).

The region spanning 122 to 200 (PLRINRKIVK…LQVCFIGVVC (79 aa)) is the Cytochrome b5 heme-binding domain. Heme is bound by residues H158 and H182.

Belongs to the cytochrome b5 family.

Its function is as follows. Involved in resistance to carboplatin and cisplatin. Is probably involved in a pathway contributing to genomic integrity. In Saccharomyces cerevisiae (strain ATCC 204508 / S288c) (Baker's yeast), this protein is Increased recombination centers protein 21 (IRC21).